Consider the following 489-residue polypeptide: Probable cytosol aminopeptidase (489 aa).

Residues Lys-255 and Asp-260 each coordinate Mn(2+). Lys-267 is a catalytic residue. Mn(2+) is bound by residues Asp-279, Asp-339, and Glu-341. The active site involves Arg-343.

It belongs to the peptidase M17 family. The cofactor is Mn(2+).

The protein resides in the cytoplasm. It catalyses the reaction Release of an N-terminal amino acid, Xaa-|-Yaa-, in which Xaa is preferably Leu, but may be other amino acids including Pro although not Arg or Lys, and Yaa may be Pro. Amino acid amides and methyl esters are also readily hydrolyzed, but rates on arylamides are exceedingly low.. The catalysed reaction is Release of an N-terminal amino acid, preferentially leucine, but not glutamic or aspartic acids.. Functionally, presumably involved in the processing and regular turnover of intracellular proteins. Catalyzes the removal of unsubstituted N-terminal amino acids from various peptides. This Synechococcus sp. (strain CC9605) protein is Probable cytosol aminopeptidase.